Consider the following 199-residue polypeptide: dITP/XTP pyrophosphatase (199 aa).

Residue 8–13 (SGNAGK) coordinates substrate. Residue Asp69 is the Proton acceptor of the active site. Asp69 contributes to the Mg(2+) binding site. Residues Ser70, 154–157 (FGYN), Lys177, and 182–183 (HR) contribute to the substrate site.

The protein belongs to the HAM1 NTPase family. Homodimer. Mg(2+) is required as a cofactor.

It catalyses the reaction XTP + H2O = XMP + diphosphate + H(+). It carries out the reaction dITP + H2O = dIMP + diphosphate + H(+). The enzyme catalyses ITP + H2O = IMP + diphosphate + H(+). In terms of biological role, pyrophosphatase that catalyzes the hydrolysis of nucleoside triphosphates to their monophosphate derivatives, with a high preference for the non-canonical purine nucleotides XTP (xanthosine triphosphate), dITP (deoxyinosine triphosphate) and ITP. Seems to function as a house-cleaning enzyme that removes non-canonical purine nucleotides from the nucleotide pool, thus preventing their incorporation into DNA/RNA and avoiding chromosomal lesions. In Xylella fastidiosa (strain 9a5c), this protein is dITP/XTP pyrophosphatase.